A 144-amino-acid polypeptide reads, in one-letter code: Interleukin-9 (144 aa).

The signal sequence occupies residues 1–18; sequence MLLAMVLTSALLLCSVAG. A Pyrrolidone carboxylic acid modification is found at glutamine 19. Asparagine 50, asparagine 63, asparagine 78, and asparagine 114 each carry an N-linked (GlcNAc...) asparagine glycan.

Belongs to the IL-7/IL-9 family. As to quaternary structure, interacts with IL9R. Interacts with IL2RG.

Its subcellular location is the secreted. Multifunctional cytokine secreted mainly by T-helper 2 lymphocytes and also mast cells or NKT cells that plays important roles in the immune response against parasites. Affects intestinal epithelial permeability and adaptive immunity. In addition, induces the differentiation of specific T-cell subsets such as IL-17 producing helper T-cells (TH17) and also proliferation and differentiation of mast cells. Mechanistically, exerts its biological effects through a receptor composed of IL9R subunit and a signal transducing subunit IL2RG. Receptor stimulation results in the rapid activation of JAK1 and JAK3 kinase activities leading to STAT1, STAT3 and STAT5-mediated transcriptional programs. Induction of differentiation genes seems to be mediated by STAT1 alone, while protection of cells from apoptosis depends on STAT3 and STAT5. The chain is Interleukin-9 (IL9) from Homo sapiens (Human).